The chain runs to 288 residues: Dichloromethane dehalogenase (288 aa).

The region spanning 12-94 is the GST N-terminal domain; sequence KTLRLLYHPA…YVNEKFDGAG (83 aa). Residues 100–252 enclose the GST C-terminal domain; it reads GTQERAQINQ…ASMFKRKTAV (153 aa).

Belongs to the GST superfamily. As to quaternary structure, homohexamer.

It is found in the cytoplasm. The enzyme catalyses dichloromethane + H2O = formaldehyde + 2 chloride + 2 H(+). Its pathway is xenobiotic degradation; dichloromethane degradation. This Methylorubrum extorquens (strain DSM 6343 / CIP 106787 / DM4) (Methylobacterium extorquens) protein is Dichloromethane dehalogenase (dcmA).